The sequence spans 387 residues: Carbamoyl phosphate synthase small chain (387 aa).

A CPSase region spans residues 1–196 (MEGVLSQLAV…FSINKQKFLF (196 aa)). L-glutamine is bound by residues Ser51, Gly245, and Gly247. Residues 197–384 (HVVVYDFGVK…IKLIVSQKTT (188 aa)) enclose the Glutamine amidotransferase type-1 domain. Residue Cys273 is the Nucleophile of the active site. Positions 274, 277, 315, and 318 each coordinate L-glutamine. Active-site residues include His357 and Glu359.

The protein belongs to the CarA family. In terms of assembly, composed of two chains; the small (or glutamine) chain promotes the hydrolysis of glutamine to ammonia, which is used by the large (or ammonia) chain to synthesize carbamoyl phosphate. Tetramer of heterodimers (alpha,beta)4.

The enzyme catalyses hydrogencarbonate + L-glutamine + 2 ATP + H2O = carbamoyl phosphate + L-glutamate + 2 ADP + phosphate + 2 H(+). It carries out the reaction L-glutamine + H2O = L-glutamate + NH4(+). The protein operates within amino-acid biosynthesis; L-arginine biosynthesis; carbamoyl phosphate from bicarbonate: step 1/1. It functions in the pathway pyrimidine metabolism; UMP biosynthesis via de novo pathway; (S)-dihydroorotate from bicarbonate: step 1/3. In terms of biological role, small subunit of the glutamine-dependent carbamoyl phosphate synthetase (CPSase). CPSase catalyzes the formation of carbamoyl phosphate from the ammonia moiety of glutamine, carbonate, and phosphate donated by ATP, constituting the first step of 2 biosynthetic pathways, one leading to arginine and/or urea and the other to pyrimidine nucleotides. The small subunit (glutamine amidotransferase) binds and cleaves glutamine to supply the large subunit with the substrate ammonia. In Buchnera aphidicola subsp. Acyrthosiphon pisum (strain APS) (Acyrthosiphon pisum symbiotic bacterium), this protein is Carbamoyl phosphate synthase small chain.